Reading from the N-terminus, the 675-residue chain is uncharacterized protein (675 aa).

Helical transmembrane passes span Gln2–Phe22, Leu397–Ala417, Leu448–Tyr468, and Ile481–Ala501. 2 disordered regions span residues Tyr616–Asp635 and Gln646–Asp675. Residues Val665 to Asp675 show a composition bias toward acidic residues. Phosphoserine is present on Ser669.

The protein belongs to the 1-acyl-sn-glycerol-3-phosphate acyltransferase family.

It localises to the endoplasmic reticulum membrane. This is an uncharacterized protein from Schizosaccharomyces pombe (strain 972 / ATCC 24843) (Fission yeast).